Reading from the N-terminus, the 331-residue chain is UDP-N-acetylenolpyruvoylglucosamine reductase (331 aa).

The 168-residue stretch at 54–221 (RVGGAAELYV…TQATFQLQPG (168 aa)) folds into the FAD-binding PCMH-type domain. Arg-200 is a catalytic residue. The Proton donor role is filled by Ser-251. Glu-321 is a catalytic residue.

The protein belongs to the MurB family. Requires FAD as cofactor.

The protein resides in the cytoplasm. It catalyses the reaction UDP-N-acetyl-alpha-D-muramate + NADP(+) = UDP-N-acetyl-3-O-(1-carboxyvinyl)-alpha-D-glucosamine + NADPH + H(+). The protein operates within cell wall biogenesis; peptidoglycan biosynthesis. Its function is as follows. Cell wall formation. This is UDP-N-acetylenolpyruvoylglucosamine reductase from Nostoc sp. (strain PCC 7120 / SAG 25.82 / UTEX 2576).